The following is a 617-amino-acid chain: Chaperone protein HscA homolog (617 aa).

Residues 1-23 (MALLQIAEPGQSSAPHEHKRAAG) are disordered.

This sequence belongs to the heat shock protein 70 family.

Its function is as follows. Chaperone involved in the maturation of iron-sulfur cluster-containing proteins. Has a low intrinsic ATPase activity which is markedly stimulated by HscB. This is Chaperone protein HscA homolog from Vibrio vulnificus (strain YJ016).